Consider the following 71-residue polypeptide: Small ribosomal subunit protein eS17 (71 aa).

The protein belongs to the eukaryotic ribosomal protein eS17 family.

The sequence is that of Small ribosomal subunit protein eS17 from Pyrobaculum islandicum (strain DSM 4184 / JCM 9189 / GEO3).